A 482-amino-acid polypeptide reads, in one-letter code: tRNA sulfurtransferase (482 aa).

One can recognise a THUMP domain in the interval 61 to 165 (KETLEVLTQT…NDKLNQVIER (105 aa)). ATP is bound by residues 183–184 (LI), lysine 265, glycine 287, and glutamine 296. Cysteine 344 and cysteine 456 form a disulfide bridge. Positions 404 to 482 (VAEHAVVLDI…GFHNVKVYRP (79 aa)) constitute a Rhodanese domain. Residue cysteine 456 is the Cysteine persulfide intermediate of the active site.

The protein belongs to the ThiI family.

Its subcellular location is the cytoplasm. It catalyses the reaction [ThiI sulfur-carrier protein]-S-sulfanyl-L-cysteine + a uridine in tRNA + 2 reduced [2Fe-2S]-[ferredoxin] + ATP + H(+) = [ThiI sulfur-carrier protein]-L-cysteine + a 4-thiouridine in tRNA + 2 oxidized [2Fe-2S]-[ferredoxin] + AMP + diphosphate. The enzyme catalyses [ThiS sulfur-carrier protein]-C-terminal Gly-Gly-AMP + S-sulfanyl-L-cysteinyl-[cysteine desulfurase] + AH2 = [ThiS sulfur-carrier protein]-C-terminal-Gly-aminoethanethioate + L-cysteinyl-[cysteine desulfurase] + A + AMP + 2 H(+). It functions in the pathway cofactor biosynthesis; thiamine diphosphate biosynthesis. In terms of biological role, catalyzes the ATP-dependent transfer of a sulfur to tRNA to produce 4-thiouridine in position 8 of tRNAs, which functions as a near-UV photosensor. Also catalyzes the transfer of sulfur to the sulfur carrier protein ThiS, forming ThiS-thiocarboxylate. This is a step in the synthesis of thiazole, in the thiamine biosynthesis pathway. The sulfur is donated as persulfide by IscS. The polypeptide is tRNA sulfurtransferase (Vibrio atlanticus (strain LGP32) (Vibrio splendidus (strain Mel32))).